A 327-amino-acid polypeptide reads, in one-letter code: GMP reductase (327 aa).

Cysteine 175 serves as the catalytic Thioimidate intermediate. Position 204-227 (isoleucine 204–valine 227) interacts with NADP(+).

This sequence belongs to the IMPDH/GMPR family. GuaC type 2 subfamily.

The enzyme catalyses IMP + NH4(+) + NADP(+) = GMP + NADPH + 2 H(+). In terms of biological role, catalyzes the irreversible NADPH-dependent deamination of GMP to IMP. It functions in the conversion of nucleobase, nucleoside and nucleotide derivatives of G to A nucleotides, and in maintaining the intracellular balance of A and G nucleotides. The sequence is that of GMP reductase from Bacillus cereus (strain ATCC 10987 / NRS 248).